Reading from the N-terminus, the 630-residue chain is Adagio-like protein 3 (630 aa).

In terms of domain architecture, PAS spans 54 to 126 (EDEAAAWEGR…PLVDPMVVSE (73 aa)). At cysteine 102 the chain carries S-4a-FMN cysteine. The 49-residue stretch at 220 to 268 (YCCILQLSDEVLAHNILSRLSPRDVASIGSVCTRMHELTKNDHLRKMVC) folds into the F-box domain. Kelch repeat units follow at residues 380–430 (SWLV…CTLD), 432–483 (SKLV…SVFG), 485–537 (TKLF…RLDH), 545–597 (GRII…CVVG), and 599–629 (TRVL…PDED).

Belongs to the ADAGIO family. Post-translationally, FMN binds covalently to cysteine after exposure to blue light and is reversed in the dark.

It is found in the nucleus. It functions in the pathway protein modification; protein ubiquitination. Component of an E3 ubiquitin ligase complex that plays a central role in blue light-dependent circadian cycles. Acts as a blue light photoreceptor, due to the presence of FMN, that mediates light-regulated protein degradation of critical clock components by targeting them to the proteasome complex. The SCF(ADO3) E3 ubiquitin ligase complex is involved in the regulation of circadian clock-dependent processes including transition to flowering time, hypocotyl elongation, cotyledons and leaf movement rhythms. This chain is Adagio-like protein 3, found in Oryza sativa subsp. japonica (Rice).